Here is a 413-residue protein sequence, read N- to C-terminus: 3-oxoacyl-[acyl-carrier-protein] synthase 2 (413 aa).

In terms of domain architecture, Ketosynthase family 3 (KS3) spans Lys-3–Lys-412. Active-site for beta-ketoacyl synthase activity residues include Cys-164, His-304, and His-341.

The protein belongs to the thiolase-like superfamily. Beta-ketoacyl-ACP synthases family. As to quaternary structure, homodimer.

It catalyses the reaction a fatty acyl-[ACP] + malonyl-[ACP] + H(+) = a 3-oxoacyl-[ACP] + holo-[ACP] + CO2. The enzyme catalyses (9Z)-hexadecenoyl-[ACP] + malonyl-[ACP] + H(+) = 3-oxo-(11Z)-octadecenoyl-[ACP] + holo-[ACP] + CO2. Its pathway is lipid metabolism; fatty acid biosynthesis. Involved in the type II fatty acid elongation cycle. Catalyzes the elongation of a wide range of acyl-ACP by the addition of two carbons from malonyl-ACP to an acyl acceptor. Can efficiently catalyze the conversion of palmitoleoyl-ACP (cis-hexadec-9-enoyl-ACP) to cis-vaccenoyl-ACP (cis-octadec-11-enoyl-ACP), an essential step in the thermal regulation of fatty acid composition. This is 3-oxoacyl-[acyl-carrier-protein] synthase 2 (fabF) from Escherichia coli O157:H7.